We begin with the raw amino-acid sequence, 378 residues long: POU domain, class 3, transcription factor 2 (378 aa).

Disordered regions lie at residues 1–28, 86–118, and 151–205; these read MATTASNHYNILTSSPSIVHSEPGSMQQ, SPRDEMHNSSNLQHQSRPPHLVHQTHGNHHDSR, and LIPG…TPTS. The segment covering 164-181 has biased composition (basic and acidic residues); it reads MRDAHEDHHSPHLSDHGH. Positions 200-274 constitute a POU-specific domain; it reads EDTPTSDDLE…LLNKWLEEAD (75 aa). Ser-279 is subject to Phosphoserine. Residues 292–351 constitute a DNA-binding region (homeobox); it reads KRKKRTSIEVSVKGALESHFLKCPKPAASEITSLADSLQLEKEVVRVWFCNRRQKEKRMT. Residues 347–378 are disordered; sequence EKRMTPPGGPLPGTEDVYGDTPPHHGVQTPVQ.

The protein belongs to the POU transcription factor family. Class-3 subfamily. As to expression, predominantly expressed in the central nervous system, with strong expression in the cerebellum.

The protein localises to the nucleus. Its function is as follows. Transcription factor that may play important roles in patterning the embryonic brain. The polypeptide is POU domain, class 3, transcription factor 2 (pou3f2) (Danio rerio (Zebrafish)).